The chain runs to 120 residues: Large ribosomal subunit protein uL18 (120 aa).

The tract at residues 1-29 is disordered; that stretch reads MITKPNKNAGRKKRHAHVRRTLSGTPQRP. Basic residues predominate over residues 9 to 20; sequence AGRKKRHAHVRR.

The protein belongs to the universal ribosomal protein uL18 family. As to quaternary structure, part of the 50S ribosomal subunit; part of the 5S rRNA/L5/L18/L25 subcomplex. Contacts the 5S and 23S rRNAs.

Its function is as follows. This is one of the proteins that bind and probably mediate the attachment of the 5S RNA into the large ribosomal subunit, where it forms part of the central protuberance. The polypeptide is Large ribosomal subunit protein uL18 (Shouchella clausii (strain KSM-K16) (Alkalihalobacillus clausii)).